Here is a 233-residue protein sequence, read N- to C-terminus: Maternal B9.15 protein (233 aa).

Residues Lys-135–Asn-165 form a disordered region.

It belongs to the BTG family.

The polypeptide is Maternal B9.15 protein (Xenopus laevis (African clawed frog)).